Consider the following 343-residue polypeptide: Methionine import ATP-binding protein MetN 3 (343 aa).

One can recognise an ABC transporter domain in the interval 2–241 (IELSNITKVF…PKTPLAQKFI (240 aa)). ATP is bound at residue 38–45 (GASGAGKS).

This sequence belongs to the ABC transporter superfamily. Methionine importer (TC 3.A.1.24) family. As to quaternary structure, the complex is composed of two ATP-binding proteins (MetN), two transmembrane proteins (MetI) and a solute-binding protein (MetQ).

The protein localises to the cell inner membrane. It catalyses the reaction L-methionine(out) + ATP + H2O = L-methionine(in) + ADP + phosphate + H(+). The catalysed reaction is D-methionine(out) + ATP + H2O = D-methionine(in) + ADP + phosphate + H(+). Functionally, part of the ABC transporter complex MetNIQ involved in methionine import. Responsible for energy coupling to the transport system. This chain is Methionine import ATP-binding protein MetN 3, found in Pectobacterium atrosepticum (strain SCRI 1043 / ATCC BAA-672) (Erwinia carotovora subsp. atroseptica).